The sequence spans 140 residues: Class I hydrophobin C (140 aa).

Positions 1-23 (MKFFVPAFLFAATAMALPGSGSA) are cleaved as a signal peptide. Cystine bridges form between cysteine 41/cysteine 114, cysteine 49/cysteine 108, cysteine 50/cysteine 85, and cysteine 115/cysteine 133.

The protein belongs to the fungal hydrophobin family.

It localises to the secreted. The protein resides in the cell wall. In terms of biological role, aerial growth, conidiation, and dispersal of filamentous fungi in the environment rely upon a capability of their secreting small amphipathic proteins called hydrophobins (HPBs) with low sequence identity. Class I can self-assemble into an outermost layer of rodlet bundles on aerial cell surfaces, conferring cellular hydrophobicity that supports fungal growth, development and dispersal; whereas Class II form highly ordered films at water-air interfaces through intermolecular interactions but contribute nothing to the rodlet structure. In P.expansum, hydrophobins contribute to germination, tolerance to cold stress and mycotoxins patulin and citrinin production. HfbC is involved in the virulence on apple. This is Class I hydrophobin C from Penicillium expansum (Blue mold rot fungus).